We begin with the raw amino-acid sequence, 353 residues long: WAT1-related protein At3g28100 (353 aa).

10 helical membrane passes run 12-32 (AVFL…STLF), 43-63 (YAFL…SLFF), 81-101 (IGLL…GIEY), 105-125 (TLAS…AIIF), 137-157 (SVAK…VVLY), 187-207 (WLIG…SFIL), 219-239 (FTVS…IGLV), 252-272 (FDIT…YYVI), 283-303 (LYLA…SAVF), and 308-328 (LYLG…AVMW). The EamA domain maps to 27 to 155 (GISTLFKVAT…LSLIGALVVV (129 aa)).

Belongs to the drug/metabolite transporter (DMT) superfamily. Plant drug/metabolite exporter (P-DME) (TC 2.A.7.4) family.

It localises to the membrane. In Arabidopsis thaliana (Mouse-ear cress), this protein is WAT1-related protein At3g28100.